The following is a 465-amino-acid chain: UDP-N-acetylmuramate--L-alanine ligase (465 aa).

112–118 (GTHGKTT) lines the ATP pocket.

The protein belongs to the MurCDEF family.

It is found in the cytoplasm. It carries out the reaction UDP-N-acetyl-alpha-D-muramate + L-alanine + ATP = UDP-N-acetyl-alpha-D-muramoyl-L-alanine + ADP + phosphate + H(+). Its pathway is cell wall biogenesis; peptidoglycan biosynthesis. Cell wall formation. This is UDP-N-acetylmuramate--L-alanine ligase from Burkholderia thailandensis (strain ATCC 700388 / DSM 13276 / CCUG 48851 / CIP 106301 / E264).